The primary structure comprises 627 residues: Phosphomethylpyrimidine synthase (627 aa).

Polar residues predominate over residues 1 to 24 (MSATQKNNITRLEQLDRQSTQPFP). The interval 1 to 29 (MSATQKNNITRLEQLDRQSTQPFPNSRKV) is disordered. Residues asparagine 231, methionine 260, tyrosine 289, histidine 325, 345–347 (SRG), 386–389 (DGLR), and glutamate 425 each bind substrate. A Zn(2+)-binding site is contributed by histidine 429. Tyrosine 452 contacts substrate. Histidine 493 lines the Zn(2+) pocket. Residues cysteine 573, cysteine 576, and cysteine 581 each contribute to the [4Fe-4S] cluster site.

This sequence belongs to the ThiC family. Homodimer. [4Fe-4S] cluster serves as cofactor.

The enzyme catalyses 5-amino-1-(5-phospho-beta-D-ribosyl)imidazole + S-adenosyl-L-methionine = 4-amino-2-methyl-5-(phosphooxymethyl)pyrimidine + CO + 5'-deoxyadenosine + formate + L-methionine + 3 H(+). It functions in the pathway cofactor biosynthesis; thiamine diphosphate biosynthesis. Catalyzes the synthesis of the hydroxymethylpyrimidine phosphate (HMP-P) moiety of thiamine from aminoimidazole ribotide (AIR) in a radical S-adenosyl-L-methionine (SAM)-dependent reaction. This Pseudomonas paraeruginosa (strain DSM 24068 / PA7) (Pseudomonas aeruginosa (strain PA7)) protein is Phosphomethylpyrimidine synthase.